A 1192-amino-acid polypeptide reads, in one-letter code: Protein pangolin, isoform J (1192 aa).

Residues 351 to 357 (LGLPSEE) carry the Nuclear localization signal motif. A disordered region spans residues 691–713 (AKHTSNAQSNESKETTNDKKKPH). The HMG box DNA-binding region spans 714 to 782 (IKKPLNAFML…LHMELYPGWS (69 aa)). Disordered regions lie at residues 790–812 (VSKK…NMKK), 847–916 (PAED…SPST), 955–986 (QRPT…VSPV), and 1136–1192 (QLNN…ISVS). Positions 862–871 (SDDDEDDYDD) are enriched in acidic residues. Composition is skewed to low complexity over residues 898–915 (SMPS…QSPS) and 957–986 (PTLV…VSPV). 2 stretches are compositionally biased toward polar residues: residues 1140-1162 (RTEN…VNSS) and 1170-1192 (SQAI…ISVS).

The protein belongs to the TCF/LEF family. Binds to the beta-catenin homolog arm or to gro.

It is found in the nucleus. Its function is as follows. Segment polarity protein. Functions together with arm to transduce the Wingless (Wg) signal in embryos and in developing adult tissues. Acts as a transcriptional activator, but in the absence of arm, it binds to gro and acts as a transcriptional repressor of wg-responsive genes. The chain is Protein pangolin, isoform J from Drosophila melanogaster (Fruit fly).